A 524-amino-acid polypeptide reads, in one-letter code: Ribonuclease Y (524 aa).

A helical membrane pass occupies residues 7–27 (LGGLLTGIVIAIIASIIASVI). A KH domain is found at 214 to 299 (TVSVVPLPND…EMVEKARKEV (86 aa)). An HD domain is found at 340-433 (VLSHSIEVAR…VQAADSISAA (94 aa)).

It belongs to the RNase Y family.

It localises to the cell membrane. In terms of biological role, endoribonuclease that initiates mRNA decay. This is Ribonuclease Y from Acetivibrio thermocellus (strain ATCC 27405 / DSM 1237 / JCM 9322 / NBRC 103400 / NCIMB 10682 / NRRL B-4536 / VPI 7372) (Clostridium thermocellum).